A 360-amino-acid polypeptide reads, in one-letter code: Protein phosphatase 1 regulatory subunit 7 (360 aa).

A disordered region spans residues 1-64; sequence MAAERGAGQQ…GEEDPEEEHE (64 aa). Residue Ala2 is modified to N-acetylalanine. Phosphoserine is present on residues Ser12, Ser24, Ser27, Ser44, and Ser47. Positions 17–34 are enriched in basic and acidic residues; the sequence is EVDRRVESEESGDEEGKK. Residues 53–63 show a composition bias toward acidic residues; that stretch reads ERGEEDPEEEH. 11 LRR repeats span residues 77–98, 99–120, 121–142, 143–164, 165–186, 187–208, 209–230, 231–252, 253–274, 275–296, and 297–318; these read DAEDVDLNHYRIGKIEGFEVLK, KVKTLCLRQNLIKCIENLEELQ, SLRELDLYDNQIKKIENLEALT, ELEILDISFNLLRNIEGVDKVT, QLKKLFLVNNKISKIENLSNLH, QLQMLELGSNRIRAIENIDTLT, NLESLFLGKNKITKLQNLDALT, NLTVLSMQSNRLTKIEGLQNLV, NLQELYLSHNGIEVIEGLENNN, KLTMLDIASNRIKKIENISHLT, and EPQEFWMNDNLLESWSDLDELK. Ser322 carries the phosphoserine modification. The 30-residue stretch at 331–360 folds into the LRRCT domain; sequence NPLQKDPQYRRKVMLALPSVRQIDATFVRF.

Belongs to the SDS22 family. As to quaternary structure, interacts with PPP1CA, PPP1CB and PPP1CC/PPP1G.

It is found in the nucleus. In terms of biological role, regulatory subunit of protein phosphatase 1. The sequence is that of Protein phosphatase 1 regulatory subunit 7 (PPP1R7) from Pongo abelii (Sumatran orangutan).